Here is a 324-residue protein sequence, read N- to C-terminus: Archaeosine synthase subunit beta (324 aa).

The region spanning 12–254 (GKPGTALFII…LIWAKRKFPN (243 aa)) is the Radical SAM core domain. The [4Fe-4S] cluster site is built by cysteine 27, cysteine 36, and cysteine 39.

This sequence belongs to the radical SAM superfamily. RaSEA family. As to quaternary structure, forms a robust complex with the archaeosine synthase alpha subunit ArcS, likely an alpha(2)beta(2) heterotetrameric structure. It depends on [4Fe-4S] cluster as a cofactor.

It carries out the reaction 7-N-[(5S)-5-amino-5-carboxypentyl]formamidino-7-deazaguanosine(15) in tRNA + S-adenosyl-L-methionine = archaeosine(15) in tRNA + L-1-piperideine-6-carboxylate + 5'-deoxyadenosine + L-methionine + 2 H(+). It functions in the pathway tRNA modification; archaeosine-tRNA biosynthesis. Functionally, radical SAM enzyme involved in the synthesis of archaeosine, a modified nucleoside present in the dihydrouridine loop (D-loop) of archaeal tRNAs. Catalyzes the cleavage of the C(epsilon)-N bond of the lysine moiety of q0kN15-tRNA, leading to the formation of archaeosine at position 15 in tRNAs. The protein is Archaeosine synthase subunit beta of Thermococcus kodakarensis (strain ATCC BAA-918 / JCM 12380 / KOD1) (Pyrococcus kodakaraensis (strain KOD1)).